The chain runs to 255 residues: Probable esterase ATEG_07663 (255 aa).

Residues Ser122, Asp200, and His227 each act as charge relay system in the active site.

It belongs to the LovG family.

Its function is as follows. Probable esterase; part of the cluster B that mediates the biosynthesis of azasperpyranones, members of the azaphilone family that exhibit anti-cancer activities. Azasperpyranones are synthesized by 2 clusters, A and B. Cluster A is responsible for the production of the polyhydric phenol moiety while the azaphilonoid scaffold is produced by the cluster B. The non-reducing polyketide synthase ATEG_03629 produces 5-methyl orsellinic acid, which is then reduced to 5-methyl orsellinic aldehyde by the NRPS-like protein ATEG_03630. 5-methyl orsellinic aldehyde is then first hydroxylated by the FAD-dependent monooxygenase ATEG_03635 and subsequently hydroxylated by the cytochrome P450 monooxygenase ATEG_03631 to produce the unstable polyhydric phenol precursor of azasperpyranones. On the other hand, the polyketide synthase ATEG_07659 is responsible for producing the 3,5-dimethyloctadienone moiety from acetyl-CoA, three malonyl-CoA, and two S-adenosyl methionines (SAM). The 3,5-dimethyloctadienone moiety is then loaded onto the SAT domain of ATEG_07661 and extended with four malonyl-CoA and one SAM, which leads to the formation of 2,4-dihydroxy-6-(5,7-dimethyl-2-oxo-trans-3-trans-5-nonadienyl)-3-methylbenzaldehyde (compound 8) after reductive release and aldol condensation. The FAD-dependent monooxygenase ATEG_07662 is the next enzyme in the biosynthesis sequence and hydroxylates the side chain at the benzylic position of compound 8. In Aspergillus nidulans, afoF, the ortholog of the FAD-dependent oxygenase ATEG_07660, is the key enzyme for the biosynthesis of asperfuranone by catalyzing the hydroxylation at C-8 of to prevent the formation of a six-membered ring hemiacetal intermediate and thus facilitating the formation of a five-membered ring to produce asperfuranone. In Aspergillus terreus, ATEG_07660 is probably not functional, which leads to the formation of the six-membered ring hemiacetal intermediate presperpyranone instead of asperfuranone. Finally, ATEG_03636 is involved in the condensation of the polyhydric phenol moiety produced by cluster A and the perasperpyranone precursor produced by cluster B, to yield azasperpyranone A. Further modifications of azasperpyranone A result in the production of derivatives, including azasperpyranone B to F. This chain is Probable esterase ATEG_07663, found in Aspergillus terreus (strain NIH 2624 / FGSC A1156).